The chain runs to 723 residues: FACT complex subunit Ssrp1 (723 aa).

At serine 443 the chain carries Phosphoserine. 2 disordered regions span residues 459–564 (EARE…AFML) and 586–723 (AKKG…EASD). Composition is skewed to acidic residues over residues 464 to 478 (EEDD…ESTD) and 486 to 507 (NESD…DDSD). The segment covering 531–557 (KKEKKHKEKERTKKPSKKKKDSGKPKR) has biased composition (basic residues). A DNA-binding region (HMG box) is located at residues 555 to 621 (PKRATTAFML…RYHDEMRNYK (67 aa)). Positions 586-621 (AKKGGEMWKELKDKSKWEDAAAKDKQRYHDEMRNYK) are enriched in basic and acidic residues. Residue serine 628 is modified to Phosphoserine. The span at 644 to 656 (PSPSKKANTSGSG) shows a compositional bias: polar residues. Serine 664 and serine 668 each carry phosphoserine. Residues 664–676 (SDDDSTSSDDEKD) are compositionally biased toward acidic residues. Threonine 669 bears the Phosphothreonine mark. 2 positions are modified to phosphoserine: serine 670 and serine 671. A compositionally biased stretch (basic and acidic residues) spans 677–692 (NEPAKKKSKPPSDGDA). Over residues 702–723 (EPEESEEDSNASDEDEEDEASD) the composition is skewed to acidic residues.

The protein belongs to the SSRP1 family. In terms of assembly, component of the FACT complex, a stable heterodimer of dre4/spt16 and Ssrp. Interacts with CHD1 and TRL/GAGA. In terms of tissue distribution, expressed at highest levels in nurse cells of the ovary.

It is found in the nucleus. The protein localises to the chromosome. It localises to the nucleolus. Functionally, component of the FACT complex, a general chromatin factor that acts to reorganize nucleosomes. The FACT complex is involved in multiple processes that require DNA as a template such as mRNA elongation, DNA replication and DNA repair. During transcription elongation the FACT complex acts as a histone chaperone that both destabilizes and restores nucleosomal structure. It facilitates the passage of RNA polymerase II and transcription by promoting the dissociation of one histone H2A-H2B dimer from the nucleosome, then subsequently promotes the reestablishment of the nucleosome following the passage of RNA polymerase II. Binds specifically to single-stranded DNA and RNA with highest affinity for nucleotides G and U. The FACT complex is required for expression of Hox genes. In Drosophila melanogaster (Fruit fly), this protein is FACT complex subunit Ssrp1 (Ssrp).